Here is a 362-residue protein sequence, read N- to C-terminus: DNA replication and repair protein RecF (362 aa).

30–37 is a binding site for ATP; the sequence is GDNAQGKT.

This sequence belongs to the RecF family.

Its subcellular location is the cytoplasm. Functionally, the RecF protein is involved in DNA metabolism; it is required for DNA replication and normal SOS inducibility. RecF binds preferentially to single-stranded, linear DNA. It also seems to bind ATP. This Agathobacter rectalis (strain ATCC 33656 / DSM 3377 / JCM 17463 / KCTC 5835 / VPI 0990) (Eubacterium rectale) protein is DNA replication and repair protein RecF.